Consider the following 815-residue polypeptide: Lon protease 1 (815 aa).

A Lon N-terminal domain is found at 14–211 (IAILPLLGTV…KLNEVLTREL (198 aa)). Residue 370 to 377 (GPPGVGKT) participates in ATP binding. Residues 606 to 787 (TDRPGIVTGL…GQVIELALRA (182 aa)) form the Lon proteolytic domain. Active-site residues include serine 693 and lysine 736.

This sequence belongs to the peptidase S16 family. As to quaternary structure, homohexamer. Organized in a ring with a central cavity.

It localises to the cytoplasm. The catalysed reaction is Hydrolysis of proteins in presence of ATP.. ATP-dependent serine protease that mediates the selective degradation of mutant and abnormal proteins as well as certain short-lived regulatory proteins. Required for cellular homeostasis and for survival from DNA damage and developmental changes induced by stress. Degrades polypeptides processively to yield small peptide fragments that are 5 to 10 amino acids long. Binds to DNA in a double-stranded, site-specific manner. This chain is Lon protease 1, found in Herpetosiphon aurantiacus (strain ATCC 23779 / DSM 785 / 114-95).